A 580-amino-acid polypeptide reads, in one-letter code: Glutamine--tRNA ligase (580 aa).

A 'HIGH' region motif is present at residues 51-61 (PEPNGYLHIGH). ATP-binding positions include 52 to 54 (EPN) and 58 to 64 (HIGHAKS). Residues Asp84 and Tyr233 each coordinate L-glutamine. ATP is bound by residues Thr252 and 287 to 288 (RL). The short motif at 294–298 (ITSKR) is the 'KMSKS' region element.

This sequence belongs to the class-I aminoacyl-tRNA synthetase family. Monomer.

Its subcellular location is the cytoplasm. It catalyses the reaction tRNA(Gln) + L-glutamine + ATP = L-glutaminyl-tRNA(Gln) + AMP + diphosphate. This Ralstonia nicotianae (strain ATCC BAA-1114 / GMI1000) (Ralstonia solanacearum) protein is Glutamine--tRNA ligase.